A 157-amino-acid polypeptide reads, in one-letter code: UPF0254 protein MTH_1148 (157 aa).

The protein belongs to the UPF0254 family.

This Methanothermobacter thermautotrophicus (strain ATCC 29096 / DSM 1053 / JCM 10044 / NBRC 100330 / Delta H) (Methanobacterium thermoautotrophicum) protein is UPF0254 protein MTH_1148.